The following is a 236-amino-acid chain: uncharacterized protein (236 aa).

The N-terminal stretch at methionine 1–serine 29 is a signal peptide.

This is an uncharacterized protein from Archaeoglobus fulgidus (strain ATCC 49558 / DSM 4304 / JCM 9628 / NBRC 100126 / VC-16).